The primary structure comprises 521 residues: AAA ATPase forming ring-shaped complexes (521 aa).

Residues Thr4–Gln44 are a coiled coil. Gly235 to Met240 is a binding site for ATP.

The protein belongs to the AAA ATPase family. As to quaternary structure, homohexamer. Assembles into a hexameric ring structure.

The protein is AAA ATPase forming ring-shaped complexes of Bifidobacterium longum (strain DJO10A).